The chain runs to 330 residues: Aspartate--ammonia ligase (330 aa).

It belongs to the class-II aminoacyl-tRNA synthetase family. AsnA subfamily.

The protein resides in the cytoplasm. The enzyme catalyses L-aspartate + NH4(+) + ATP = L-asparagine + AMP + diphosphate + H(+). It functions in the pathway amino-acid biosynthesis; L-asparagine biosynthesis; L-asparagine from L-aspartate (ammonia route): step 1/1. This is Aspartate--ammonia ligase from Streptococcus thermophilus (strain ATCC BAA-250 / LMG 18311).